Reading from the N-terminus, the 346-residue chain is uncharacterized protein (346 aa).

His65 contacts Zn(2+). Asp67 is a catalytic residue. Asp89 contacts Zn(2+). Glu115 serves as the catalytic Proton acceptor. 3 residues coordinate Zn(2+): Glu116, Glu145, and His319.

Belongs to the peptidase M20A family. Zn(2+) is required as a cofactor. It depends on Co(2+) as a cofactor.

This is an uncharacterized protein from Methanocaldococcus jannaschii (strain ATCC 43067 / DSM 2661 / JAL-1 / JCM 10045 / NBRC 100440) (Methanococcus jannaschii).